Consider the following 389-residue polypeptide: Pregnancy-associated glycoprotein 1 (389 aa).

An N-terminal signal peptide occupies residues Met-1–Cys-15. In terms of domain architecture, Peptidase A1 spans Tyr-76–Arg-386. The N-linked (GlcNAc...) asparagine glycan is linked to Asn-79. Residue Asp-94 is part of the active site. A disulfide bridge connects residues Cys-107 and Cys-112. N-linked (GlcNAc...) asparagine glycosylation is present at Asn-130. The cysteines at positions 268 and 272 are disulfide-linked. Asp-277 is an active-site residue. Cys-311 and Cys-345 are oxidised to a cystine. N-linked (GlcNAc...) asparagine glycosylation is present at Asn-348.

This sequence belongs to the peptidase A1 family. Expressed throughout the chorion, with the signal localized exclusively over the trophectoderm.

It is found in the secreted. The protein localises to the extracellular space. Its function is as follows. Appears to be proteolytically inactive. The chain is Pregnancy-associated glycoprotein 1 from Sus scrofa (Pig).